A 190-amino-acid polypeptide reads, in one-letter code: Dynactin subunit 6 (190 aa).

Phosphothreonine is present on threonine 186.

This sequence belongs to the dynactin subunits 5/6 family. Dynactin subunit 6 subfamily. Subunit of dynactin, a multiprotein complex part of a tripartite complex with dynein and a adapter, such as BICDL1, BICD2 or HOOK3. The dynactin complex is built around ACTR1A/ACTB filament and consists of an actin-related filament composed of a shoulder domain, a pointed end and a barbed end. Its length is defined by its flexible shoulder domain. The soulder is composed of 2 DCTN1 subunits, 4 DCTN2 and 2 DCTN3. The 4 DCNT2 (via N-terminus) bind the ACTR1A filament and act as molecular rulers to determine the length. The pointed end is important for binding dynein-dynactin cargo adapters. Consists of 4 subunits: ACTR10, DCNT4, DCTN5 and DCTN6. Within the complex DCTN6 forms a heterodimer with DCTN5. The barbed end is composed of a CAPZA1:CAPZB heterodimers, which binds ACTR1A/ACTB filament and dynactin and stabilizes dynactin. Interacts with PLK1. Interacts with N4BP2L1. Post-translationally, phosphorylation at Thr-186 by CDK1 during mitotic prometaphase creates a binding site for PLK1 that facilitates its recruitment to kinetochores.

Its subcellular location is the cytoplasm. The protein localises to the cytoskeleton. It is found in the chromosome. It localises to the centromere. The protein resides in the kinetochore. In terms of biological role, part of the dynactin complex that activates the molecular motor dynein for ultra-processive transport along microtubules. The sequence is that of Dynactin subunit 6 (DCTN6) from Sus scrofa (Pig).